The following is a 120-amino-acid chain: MKLSRKESVRRRHQRVRRKINGTAERPRLSVFRSNNHIYAQIIDDVAQHTLAAASTLEATLRGELESTATQEASAAVGKLVAQRALDKGIEQVVFDRGGNLYHGRVKALAEAARSAGLNF.

The interval 1–23 (MKLSRKESVRRRHQRVRRKINGT) is disordered. The span at 8–20 (SVRRRHQRVRRKI) shows a compositional bias: basic residues.

Belongs to the universal ribosomal protein uL18 family. Part of the 50S ribosomal subunit; part of the 5S rRNA/L5/L18/L25 subcomplex. Contacts the 5S and 23S rRNAs.

In terms of biological role, this is one of the proteins that bind and probably mediate the attachment of the 5S RNA into the large ribosomal subunit, where it forms part of the central protuberance. This chain is Large ribosomal subunit protein uL18, found in Microcystis aeruginosa (strain NIES-843 / IAM M-2473).